The sequence spans 55 residues: Large ribosomal subunit protein uL15 (55 aa).

The protein belongs to the universal ribosomal protein uL15 family. Part of the 50S ribosomal subunit.

Binds to the 23S rRNA. In Lactococcus lactis subsp. cremoris (Streptococcus cremoris), this protein is Large ribosomal subunit protein uL15 (rplO).